The sequence spans 218 residues: Mitochondrial fission factor (218 aa).

Over Met1–Met198 the chain is Cytoplasmic. Thr89 carries the phosphothreonine modification. A phosphoserine mark is found at Ser129, Ser131, Ser146, and Ser171. Positions Val167 to Met198 form a coiled coil. Residues Val199 to Phe216 form a helical; Anchor for type IV membrane protein membrane-spanning segment. Residues Arg217–Arg218 are Mitochondrial intermembrane-facing.

Belongs to the Tango11 family. In terms of assembly, homodimer. Interacts with DNM1L. Interacts with C11orf65/MFI; the interaction inhibits MFF interaction with DNM1L.

The protein resides in the mitochondrion outer membrane. Its subcellular location is the peroxisome. It is found in the cytoplasmic vesicle. The protein localises to the secretory vesicle. It localises to the synaptic vesicle. Its function is as follows. Plays a role in mitochondrial and peroxisomal fission. Promotes the recruitment and association of the fission mediator dynamin-related protein 1 (DNM1L) to the mitochondrial surface. May be involved in regulation of synaptic vesicle membrane dynamics by recruitment of DNM1L to clathrin-containing vesicles. The chain is Mitochondrial fission factor (MFF) from Bos taurus (Bovine).